Reading from the N-terminus, the 240-residue chain is 3-dehydroquinate dehydratase (240 aa).

3-dehydroquinate-binding positions include Ser-15, 42–44 (EWR), and Arg-73. Catalysis depends on His-132, which acts as the Proton donor/acceptor. Catalysis depends on Lys-160, which acts as the Schiff-base intermediate with substrate. 3 residues coordinate 3-dehydroquinate: Arg-202, Ser-221, and Gln-225.

The protein belongs to the type-I 3-dehydroquinase family. Homodimer.

It catalyses the reaction 3-dehydroquinate = 3-dehydroshikimate + H2O. It functions in the pathway metabolic intermediate biosynthesis; chorismate biosynthesis; chorismate from D-erythrose 4-phosphate and phosphoenolpyruvate: step 3/7. Functionally, involved in the third step of the chorismate pathway, which leads to the biosynthesis of aromatic amino acids. Catalyzes the cis-dehydration of 3-dehydroquinate (DHQ) and introduces the first double bond of the aromatic ring to yield 3-dehydroshikimate. The sequence is that of 3-dehydroquinate dehydratase from Latilactobacillus sakei subsp. sakei (strain 23K) (Lactobacillus sakei subsp. sakei).